We begin with the raw amino-acid sequence, 110 residues long: Nucleoprotein (110 aa).

Positions 1-24 (MASRRSRPQAASFRNGRRRQPTSY) are disordered.

Belongs to the arteriviridae nucleocapsid family.

It is found in the virion. The protein is Nucleoprotein (N) of Equine arteritis virus (strain Bucyrus) (EAV).